Reading from the N-terminus, the 309-residue chain is D-allose kinase (309 aa).

Residues 10 to 17 (GVDMGATH) and 142 to 149 (GMGFAVWM) contribute to the ATP site.

The protein belongs to the ROK (NagC/XylR) family.

The catalysed reaction is D-allose + ATP = D-allose 6-phosphate + ADP + H(+). It participates in carbohydrate degradation; D-allose degradation. Its function is as follows. Catalyzes the phosphorylation of D-allose to D-allose 6-phosphate. Also has low level glucokinase activity in vitro. In Escherichia coli (strain K12), this protein is D-allose kinase.